The sequence spans 237 residues: Lectin (237 aa).

Residues Glu8 and Asp10 each contribute to the Mn(2+) site. Asp10, Tyr12, Asn14, and Asp19 together coordinate Ca(2+). A carbohydrate-binding residues include Tyr12 and Asn14. Mn(2+) is bound by residues Asp19 and His24. 98-100 contacts a carbohydrate; that stretch reads GLY. Asp208 lines the Ca(2+) pocket. A carbohydrate is bound by residues Gly227 and Arg228.

The protein belongs to the leguminous lectin family. Homotetramer; dimer of dimers. Post-translationally, concanavalin A-like lectins of the Diocleinae subtribe undergo proteolytic processing referred to as circular permutation. The propeptide is split into an N-terminal and a C-terminal part, the gamma and beta chain, respectively. These are then religated in beta-gamma order to form the mature alpha chain. The beta and gamma chains can often be detected in cell extracts. Residues 1-118 of the mature chain, as displayed here, probably constitute the beta chain in the propeptide, residues 119-237 the gamma chain.

Functionally, D-mannose/D-glucose-binding lectin with hemagglutinating activity towards rabbit and human erythrocytes. In rats, induces dose-dependent paw edema. Has low cytotoxicity against Artemisia sp. This Macropsychanthus comosus (Sea purse) protein is Lectin.